A 281-amino-acid polypeptide reads, in one-letter code: Sorbose reductase SOU1 (281 aa).

Residues isoleucine 47, lysine 74, and asparagine 119 each coordinate NADP(+). Catalysis depends on proton donor residues serine 173 and tyrosine 188. Tyrosine 188, lysine 192, isoleucine 221, and threonine 223 together coordinate NADP(+). Lysine 192 functions as the Lowers pKa of active site Tyr in the catalytic mechanism.

It belongs to the short-chain dehydrogenases/reductases (SDR) family. As to quaternary structure, homotetramer.

It catalyses the reaction D-sorbitol + NADP(+) = keto-L-sorbose + NADPH + H(+). Its pathway is carbohydrate degradation; L-sorbose degradation. In terms of biological role, catalyzes the NADP dependent reduction of L-sorbose to D-glucitol. Can also convert fructose to mannitol, but less efficiently. This Candida albicans (strain SC5314 / ATCC MYA-2876) (Yeast) protein is Sorbose reductase SOU1 (SOU1).